Reading from the N-terminus, the 150-residue chain is Ribosome maturation factor RimP (150 aa).

It belongs to the RimP family.

Its subcellular location is the cytoplasm. Functionally, required for maturation of 30S ribosomal subunits. The protein is Ribosome maturation factor RimP of Salmonella dublin (strain CT_02021853).